The primary structure comprises 369 residues: Methionine import ATP-binding protein MetN (369 aa).

Residues 31–266 (VEMKDVRRMF…PQSPVTQSML (236 aa)) enclose the ABC transporter domain. 63 to 70 (GRSGAGKS) contributes to the ATP binding site.

Belongs to the ABC transporter superfamily. Methionine importer (TC 3.A.1.24) family. The complex is composed of two ATP-binding proteins (MetN), two transmembrane proteins (MetI) and a solute-binding protein (MetQ).

The protein localises to the cell inner membrane. It catalyses the reaction L-methionine(out) + ATP + H2O = L-methionine(in) + ADP + phosphate + H(+). The catalysed reaction is D-methionine(out) + ATP + H2O = D-methionine(in) + ADP + phosphate + H(+). In terms of biological role, part of the ABC transporter complex MetNIQ involved in methionine import. Responsible for energy coupling to the transport system. This is Methionine import ATP-binding protein MetN from Brucella abortus (strain 2308).